A 686-amino-acid polypeptide reads, in one-letter code: XK-related protein 5 (686 aa).

Transmembrane regions (helical) follow at residues 33 to 53 (LLWGWLALAVLLPGFLVQALS), 205 to 225 (HFWVFVVAGAHWLVMTFWLVA), 239 to 259 (LFNLLVGAVYILCYLSFWDSP), 265 to 285 (VTFYMVMLLENIILLLLATDF), and 297 to 317 (IAGVLSGFLIGSVSLVIYYSL). 3 disordered regions span residues 339-387 (GDKT…PPEA), 448-468 (ALSAQQELPSSSRDPSTLENS), and 490-592 (FASD…APFP). Basic and acidic residues predominate over residues 340 to 359 (DKTERRDSPRATDLAGKRTE). Composition is skewed to polar residues over residues 450–468 (SAQQELPSSSRDPSTLENS) and 490–509 (FASDQQDEAPTQNPAATQGE). A compositionally biased stretch (gly residues) spans 523-536 (QGKGTGGQQRGGEG). The segment covering 550–567 (VATSSQQEGSPATLQTAH) has biased composition (polar residues).

This sequence belongs to the XK family.

It is found in the cell membrane. This is XK-related protein 5 from Homo sapiens (Human).